The primary structure comprises 104 residues: NADH-quinone oxidoreductase subunit K (104 aa).

The next 3 helical transmembrane spans lie at 4 to 24, 31 to 51, and 64 to 84; these read VPLS…LYGA, VIVL…LVAF, and IFAL…LAIL.

Belongs to the complex I subunit 4L family. As to quaternary structure, NDH-1 is composed of 14 different subunits. Subunits NuoA, H, J, K, L, M, N constitute the membrane sector of the complex.

The protein resides in the cell membrane. The catalysed reaction is a quinone + NADH + 5 H(+)(in) = a quinol + NAD(+) + 4 H(+)(out). Its function is as follows. NDH-1 shuttles electrons from NADH, via FMN and iron-sulfur (Fe-S) centers, to quinones in the respiratory chain. The immediate electron acceptor for the enzyme in this species is believed to be a menaquinone. Couples the redox reaction to proton translocation (for every two electrons transferred, four hydrogen ions are translocated across the cytoplasmic membrane), and thus conserves the redox energy in a proton gradient. This is NADH-quinone oxidoreductase subunit K from Geobacillus sp. (strain WCH70).